Reading from the N-terminus, the 298-residue chain is Cholesterol 25-hydroxylase (298 aa).

N-linked (GlcNAc...) asparagine glycosylation is present at N5. 3 consecutive transmembrane segments (helical) span residues 38-58 (IFPVTFSIITYVGFCLPFVVL), 88-108 (LGLTLYQHLVFVFPVTLLHWV), and 124-144 (LLSHVLICLLLFDTEIFAWHL). Residues 128-263 (VLICLLLFDT…FTHWDKMLGT (136 aa)) enclose the Fatty acid hydroxylase domain. Residues 142–146 (WHLLH) carry the Histidine box-1 motif. The short motif at 157 to 161 (HKVHH) is the Histidine box-2 element. An N-linked (GlcNAc...) asparagine glycan is attached at N163. A Histidine box-3 motif is present at residues 238-244 (HHDMHHS).

This sequence belongs to the sterol desaturase family. The cofactor is Fe cation. N-glycosylated. Widely expressed at low level and at higher level in the lung. Weakly expressed in the heart, lung and kidney.

The protein localises to the endoplasmic reticulum membrane. It catalyses the reaction cholesterol + AH2 + O2 = 25-hydroxycholesterol + A + H2O. The enzyme catalyses cholesterol + NADPH + O2 + H(+) = 25-hydroxycholesterol + NADP(+) + H2O. Its function is as follows. Catalyzes the formation of 25-hydroxycholesterol from cholesterol, leading to repress cholesterol biosynthetic enzymes. Plays a key role in cell positioning and movement in lymphoid tissues: 25-hydroxycholesterol is an intermediate in biosynthesis of 7-alpha,25-dihydroxycholesterol (7-alpha,25-OHC), an oxysterol that acts as a ligand for the G protein-coupled receptor GPR183/EBI2, a chemotactic receptor for a number of lymphoid cells. May play an important role in regulating lipid metabolism by synthesizing a corepressor that blocks sterol regulatory element binding protein (SREBP) processing. In testis, production of 25-hydroxycholesterol by macrophages may play a role in Leydig cell differentiation. Required to restrain inflammation in macrophages: production of 25-hydroxycholesterol protects macrophages from cholesterol overload, thereby preventing mitochondrial DNA release and subsequent activation of the AIM2 inflammasome. Interferon-stimulated gene which has broad antiviral activities against a wide range of enveloped viruses. The chain is Cholesterol 25-hydroxylase from Mus musculus (Mouse).